Consider the following 179-residue polypeptide: Large ribosomal subunit protein uL5 (179 aa).

The protein belongs to the universal ribosomal protein uL5 family. In terms of assembly, part of the 50S ribosomal subunit; part of the 5S rRNA/L5/L18/L25 subcomplex. Contacts the 5S rRNA and the P site tRNA. Forms a bridge to the 30S subunit in the 70S ribosome.

In terms of biological role, this is one of the proteins that bind and probably mediate the attachment of the 5S RNA into the large ribosomal subunit, where it forms part of the central protuberance. In the 70S ribosome it contacts protein S13 of the 30S subunit (bridge B1b), connecting the 2 subunits; this bridge is implicated in subunit movement. Contacts the P site tRNA; the 5S rRNA and some of its associated proteins might help stabilize positioning of ribosome-bound tRNAs. In Bacillus cereus (strain 03BB102), this protein is Large ribosomal subunit protein uL5.